We begin with the raw amino-acid sequence, 327 residues long: Aldo-keto reductase FVEG_12638 (327 aa).

Aspartate 51 provides a ligand contact to NADP(+). The Proton donor role is filled by tyrosine 56. A substrate-binding site is contributed by histidine 122. Residues 152–153 (SE), 202–212 (GPLGHGWLVED), and 286–294 (ENFTSRDIE) contribute to the NADP(+) site.

The protein belongs to the aldo/keto reductase family. Aldo/keto reductase 2 subfamily.

Aldo-keto reductase; part of the Fusarium detoxification of benzoxazolinone cluster 2 (FDB2) involved in the degradation of benzoxazolinones produced by the host plant. Maize, wheat, and rye produce the 2 benzoxazinone phytoanticipins 2,4-dihy-droxy-7-methoxy-1,4-benzoxazin-3-one (DIMBOA) and 2,4-dihydroxy-1,4-benzoxazin-3-one (DIBOA) that, due to their inherent instability once released, spontaneously degrade to the more stable corresponding benzoxazolinones, 6-methoxy-2-benzoxazolinone (MBOA) and 2-benzoxazolinone (BOA), respectively. The first step in the detoxification of benzoxazolinones involves the hydrolysis of the cyclic ester bond of benzoxazolinones by the FDB1 cluster gamma-lactamase MBL1 to aminophenols. MBL1 is able to convert BOA into 2-aminophenol (2-AP), as well as MBOA into 5-methoxy-2-aminophenol (2-AMP). The FDB2 cluster N-malonyltransferase FDB2/NAT1 then metabolizes aminophenols via N-malonylation to non-toxic malonamic acids. FDB2/NAT1 converts 2-AP into N-(2-hydroxyphenyl) malonamic acid (HPMA) and 2-AMP into N-(2-hydroxy-4-methoxyphenyl) malonamic acid (HMPMA). The duplicated dienlactone hydrolases DLH1 and DLH2 may provide redundant function for hydrolyzing the lactone moiety in the BOA molecule. The roles of the amidases an other enzymes encoded by the 2 FDB clusters have not been identified so far. The protein is Aldo-keto reductase FVEG_12638 of Gibberella moniliformis (strain M3125 / FGSC 7600) (Maize ear and stalk rot fungus).